Consider the following 1839-residue polypeptide: Mannuronan C5-epimerase AlgE3 (1839 aa).

8 PbH1 repeats span residues Asp-133–Glu-155, Thr-157–Tyr-179, Gln-180–Thr-202, Thr-204–Arg-226, Thr-257–Gly-279, Ala-280–Val-302, Thr-320–Glu-342, and Thr-347–Gly-369. Over residues Ser-372 to Leu-386 the composition is skewed to polar residues. The disordered stretch occupies residues Ser-372–Asn-392. 9 Hemolysin-type calcium-binding repeats span residues Glu-387–Gly-399, Gly-406–Leu-422, Gly-424–Phe-440, Thr-538–Asp-550, Gly-557–Leu-573, Val-574–Phe-591, Glu-695–Asp-709, Gly-714–Leu-730, and Gly-732–Phe-748. PbH1 repeat units lie at residues Asp-975–Glu-997, Thr-999–Tyr-1021, Leu-1022–Thr-1044, Thr-1046–Arg-1068, Thr-1099–Gly-1121, Thr-1122–Glu-1143, Thr-1161–Glu-1183, and Thr-1188–Gly-1210. Residues Val-1215–Leu-1236 show a composition bias toward polar residues. The tract at residues Val-1215–Gly-1238 is disordered. Hemolysin-type calcium-binding repeat units follow at residues Gly-1229–Glu-1243, Gly-1247–Leu-1263, Gly-1265–Phe-1281, Gly-1398–Leu-1414, Val-1415–Phe-1432, Glu-1536–Val-1552, His-1554–Phe-1571, Gly-1670–Ser-1681, Gly-1688–Leu-1704, and Gly-1706–Phe-1722.

It belongs to the D-mannuronate C5-epimerase family. It depends on Ca(2+) as a cofactor.

It is found in the secreted. The enzyme catalyses [(1-&gt;4)-beta-D-mannuronosyl](n) = [alginate](n). It participates in glycan biosynthesis; alginate biosynthesis. With respect to regulation, inhibited by zinc. In terms of biological role, converts beta-D-mannuronic acid (M) to alpha-L-guluronic acid (G), producing a polymer with gel-forming capacity, required for the formation of the cyst coat. In Azotobacter vinelandii, this protein is Mannuronan C5-epimerase AlgE3.